We begin with the raw amino-acid sequence, 201 residues long: MLVKTLYYRLVEGTFAKAMLVLDEKGTLYYASLGEDSNALRETLVTDFASKQRQFQLKPMVTLSNHERADYTALCFLKLMEEEEDWKNEGEESLQQKGAKRIPIEFIFGTELQRKVWQQLLEIPVGEVRYYGNIVEALGLPKSASRAVGNACGANKIALVVPCHRVIAQTGKLTGYRWGLATKKQILKMELGDAYTTLVSE.

DNA is bound by residues Tyr-131, Gly-132, and Arg-146. Cys-163 functions as the Nucleophile; methyl group acceptor in the catalytic mechanism.

Belongs to the MGMT family.

Its subcellular location is the nucleus. It catalyses the reaction a 6-O-methyl-2'-deoxyguanosine in DNA + L-cysteinyl-[protein] = S-methyl-L-cysteinyl-[protein] + a 2'-deoxyguanosine in DNA. The catalysed reaction is a 4-O-methyl-thymidine in DNA + L-cysteinyl-[protein] = a thymidine in DNA + S-methyl-L-cysteinyl-[protein]. Functionally, involved in the cellular defense against the biological effects of O6-methylguanine (O6-MeG) and O4-methylthymine (O4-MeT) in DNA. Repairs the methylated nucleobase in DNA by stoichiometrically transferring the methyl group to a cysteine residue in the enzyme. This is a suicide reaction: the enzyme is irreversibly inactivated. In Lodderomyces elongisporus (strain ATCC 11503 / CBS 2605 / JCM 1781 / NBRC 1676 / NRRL YB-4239) (Yeast), this protein is Methylated-DNA--protein-cysteine methyltransferase (MGT1).